The following is a 793-amino-acid chain: E3 UFM1-protein ligase 1 (793 aa).

A2 is modified (N-acetylalanine). Positions 2–200 (ADAWEEIRRL…RGLFSAITRP (199 aa)) are mediates interaction with DDRGK1. The segment at 2–212 (ADAWEEIRRL…VNSLVSKYGF (211 aa)) is required for E3 UFM1-protein ligase activity. The interval 121 to 250 (DQLSEEVNDK…KAVFVPDIYS (130 aa)) is involved in CDK5RAP3-binding. Residues 200–400 (PTPVNSLVSK…NPVHLITEED (201 aa)) are mediates interaction with TRIP4. The tract at residues 410-473 (VNTSKKDKKD…SSHGGKKKPD (64 aa)) is disordered. Position 433 is an omega-N-methylarginine (R433). Phosphoserine occurs at positions 458 and 462. A mediates interaction with CDK5RAP3 region spans residues 490 to 683 (IQDAPEEFIS…QLKVTEDPAL (194 aa)). A Phosphothreonine modification is found at T535. Positions 742–765 (NKKTGQGEDPSSDELDKEQHDVTN) are disordered. S752 and S753 each carry phosphoserine.

It belongs to the UFL1 family. In terms of assembly, catalytic component of the UFM1 ribosome E3 ligase (UREL) complex, composed of UFL1, DDRGK1 and CDK5RAP3. Interacts with E2-like enzyme UFC1. Interacts with RELA. Interacts with NBN; promoting recruitment to double-strand breaks following DNA damage. Interacts (when phosphorylated) with YWHAG/14-3-3-gamma; sequestering UFL1 and preventing its association with PDCD1/PD-1 substrate. Ubiquitinated, leading to its degradation by the proteasome. Interaction with CDK5RAP3 protects both proteins against ubiquitination and degradation via the proteasome. In terms of processing, phosphorylated at Ser-462 by ATM, enhancing protein ligase activity and promoting ATM activation in a positive feedback loop. Phosphorylation at Thr-535 by AMPK promotes its interaction with YWHAG/14-3-3-gamma, thereby preventing UFL1 association with PDCD1/PD-1 substrate. In terms of tissue distribution, ubiquitously expressed with higher expression in pancreatic islets and other secretory tissues. In the embryonic brain at 17 dpc, detected in Sox2-positive neural stem cells and in Slc1a3/GLAST-positive radial glia. In perinatal brain, highly expressed in Slc1a3-positive Bergmann glia of the cerebellum. Continues to be expressed in Bergmann glia of adult brain at 16 weeks. Expressed in adult heart. Highly expressed in the intestinal exocrine cells.

The protein resides in the endoplasmic reticulum membrane. Its subcellular location is the cytoplasm. The protein localises to the cytosol. It localises to the nucleus. It is found in the chromosome. Functionally, E3 protein ligase that mediates ufmylation, the covalent attachment of the ubiquitin-like modifier UFM1 to lysine residues on target proteins, and which plays a key role in various processes, such as ribosome recycling, response to DNA damage, interferon response or reticulophagy (also called ER-phagy). Catalyzes ufmylation of many protein, such as CD274/PD-L1, CDK5RAP3, CYB5R3, DDRGK1, EIF6, histone H4, MRE11, P4HB, PDCD1/PD-1, TRIP4, RPN1, RPS20/uS10, RPL10/uL16, RPL26/uL24, SYVN1/HRD1 and TP53/p53. As part of the UREL complex, plays a key role in ribosome recycling by catalyzing mono-ufmylation of RPL26/uL24 subunit of the 60S ribosome. Ufmylation of RPL26/uL24 occurs on free 60S ribosomes following ribosome dissociation: it weakens the junction between post-termination 60S subunits and SEC61 translocons, promoting release and recycling of the large ribosomal subunit from the endoplasmic reticulum membrane. Ufmylation of RPL26/uL24 and subsequent 60S ribosome recycling either take place after normal termination of translation or after ribosome stalling during cotranslational translocation at the endoplasmic reticulum. Involved in reticulophagy in response to endoplasmic reticulum stress by mediating ufmylation of proteins such as CYB5R3 and RPN1, thereby promoting lysosomal degradation of ufmylated proteins. Ufmylation in response to endoplasmic reticulum stress is essential for processes such as hematopoiesis, blood vessel morphogenesis or inflammatory response. Mediates ufmylation of DDRGK1 and CDK5RAP3; the role of these modifications is however unclear: as both DDRGK1 and CDK5RAP3 act as substrate adapters for ufmylation, it is uncertain whether ufmylation of these proteins is a collateral effect or is required for ufmylation. Acts as a negative regulator of T-cell activation by mediating ufmylation and stabilization of PDCD1/PD-1. Also involved in the response to DNA damage: recruited to double-strand break sites following DNA damage and mediates monoufmylation of histone H4 and ufmylation of MRE11. Mediates ufmylation of TP53/p53, promoting its stability. Catalyzes ufmylation of TRIP4, thereby playing a role in nuclear receptor-mediated transcription. Required for hematopoietic stem cell function and hematopoiesis. This is E3 UFM1-protein ligase 1 from Mus musculus (Mouse).